The chain runs to 128 residues: uncharacterized protein (128 aa).

This is an uncharacterized protein from Vaccinia virus (strain Copenhagen) (VACV).